The chain runs to 41 residues: FDGRNTSANNKATDLMALPVRGCCSDPPCRNKHPDLCGGRR.

A propeptide spanning residues 1–20 is cleaved from the precursor; the sequence is FDGRNTSANNKATDLMALPV. 2 disulfide bridges follow: C23–C29 and C24–C37. The tract at residues 25–27 is ser-Xaa-Pro motif, crucial for potent interaction with nAChR; that stretch reads SDP. C37 is modified (cysteine amide; in Alpha-conotoxin TxIB). The propeptide occupies 39–41; the sequence is GRR.

Belongs to the conotoxin A superfamily. Expressed by the venom duct.

The protein resides in the secreted. In terms of biological role, alpha-conotoxins act on postsynaptic membranes, they bind to the nicotinic acetylcholine receptors (nAChR) and thus inhibit them. This conotoxin is a subtype-specific blocker of alpha-6/alpha-3-beta-2-beta-3 (CHRNA6/CHRNA3-CHRNB2-CHRNB3) nAChRs nicotinic acetylcholine receptors (nAChRs) (IC(50)=28.4 nM). This Conus textile (Cloth-of-gold cone) protein is Alpha-conotoxin TxIB.